Reading from the N-terminus, the 246-residue chain is Ribosomal RNA small subunit methyltransferase J (246 aa).

Residues 115-116 (ER) and aspartate 169 each bind S-adenosyl-L-methionine.

This sequence belongs to the methyltransferase superfamily. RsmJ family.

The protein localises to the cytoplasm. The catalysed reaction is guanosine(1516) in 16S rRNA + S-adenosyl-L-methionine = N(2)-methylguanosine(1516) in 16S rRNA + S-adenosyl-L-homocysteine + H(+). In terms of biological role, specifically methylates the guanosine in position 1516 of 16S rRNA. This Buchnera aphidicola subsp. Acyrthosiphon pisum (strain APS) (Acyrthosiphon pisum symbiotic bacterium) protein is Ribosomal RNA small subunit methyltransferase J.